The chain runs to 185 residues: Ribosome maturation factor RimM (185 aa).

The 80-residue stretch at 106–185 folds into the PRC barrel domain; that stretch reads EGDYYWKDLM…SIEVDWDPGF (80 aa).

Belongs to the RimM family. As to quaternary structure, binds ribosomal protein uS19.

Its subcellular location is the cytoplasm. An accessory protein needed during the final step in the assembly of 30S ribosomal subunit, possibly for assembly of the head region. Essential for efficient processing of 16S rRNA. May be needed both before and after RbfA during the maturation of 16S rRNA. It has affinity for free ribosomal 30S subunits but not for 70S ribosomes. The sequence is that of Ribosome maturation factor RimM from Shigella dysenteriae serotype 1 (strain Sd197).